Reading from the N-terminus, the 350-residue chain is Phosphotriesterase-related protein (350 aa).

A divalent metal cation is bound by residues His22, His24, Glu169, His201, His230, and Asp298.

It belongs to the metallo-dependent hydrolases superfamily. Phosphotriesterase family. A divalent metal cation serves as cofactor.

This Drosophila yakuba (Fruit fly) protein is Phosphotriesterase-related protein.